Here is an 876-residue protein sequence, read N- to C-terminus: MATERYNPRDAEPRWQQQWEAGKIFETKNDDPREKYYVLEMFPYPSGRIHMGHVRNYTMGDVVARYKRARGFNVLHPMGWDAFGMPAENAAMERGVHPASWTYQNIASMKAQLKVMGLSLDWSREFATCDPEYYQRQQHLFLDFLEKGLVYRKQSKVNWDPVDNTVLANEQVIDGRGWRSGALVEQRELTQWFFRITDFSQDLLDSLDTLDEWPEKVRLMQKNWIGRSEGLSVRWELDPATVPGEEKELTVYTTRPDTLFGASFLAISADHPLARDAAAKSAEIEAFCEECRRAGTSLAALETAEKMGIDTGIRARHPFDPDWELPVYVANFVLMDYGTGAIFGCPSGDQRDLDFARKYGLPVVPVVMPKDADPQTFTIGDEAYVGDGVMINSRFLDGLSTEEAFETIATRLEKDLLNGTPRAERKVNFRLRDWGISRQRYWGCPIPVIHCDDCGVVPVPKTDLPVTLPPDVTFDKPGNPLDRHPTWRHVACPQCGKDARRETDTMDTFVDSSWYFTRFTAPWEDGPTDPKAANHWLPVDQYIGGIEHAILHLLYSRFFTRAMKATGHVALDEPFKGLFTQGMVVHETYSRGEGAQREWITPAEIRIEEADGQRRAVHIETSEEIAIGSIEKMSKSKKNVVDPDDIIASYGADTARFFVLSDSPPDRDVIWSEAGVEGAHRFVQRVWRLLSEAAEGLSAAEAAPAREGEGLAVSQAAHRTLKAVEADYDKLAFNKAVARIYELVNTLAAPLAQIAAGKADQALTAAVKDAAGILISLIAPMMPHLAEECWRAIGGKGLIAERPWPKFDATLVVENEITLPVQINGKKRADLTIARDADQSAIESAVLALDVVKTALNGSNPKKIIVVPQRIVNVVV.

A 'HIGH' region motif is present at residues proline 43–histidine 53. Positions lysine 632 to serine 636 match the 'KMSKS' region motif. Residue lysine 635 participates in ATP binding.

It belongs to the class-I aminoacyl-tRNA synthetase family.

The protein localises to the cytoplasm. It catalyses the reaction tRNA(Leu) + L-leucine + ATP = L-leucyl-tRNA(Leu) + AMP + diphosphate. The protein is Leucine--tRNA ligase of Sinorhizobium medicae (strain WSM419) (Ensifer medicae).